Reading from the N-terminus, the 641-residue chain is ATP-dependent DNA helicase PIF1 (641 aa).

The interval 1–180 (MLSGIEAAAG…LVKRPVEPQA (180 aa)) is PINT. Residues Ser-27 and Ser-151 each carry the phosphoserine modification. Residues 167 to 641 (PDTTLVKRPV…SDQENMDPIL (475 aa)) are hydrolyzes ATP in the presence of both magnesium and single-stranded DNA; weak activity in the presence of RNA or double-stranded DNA; No unwinding activity. The interval 173 to 192 (KRPVEPQAGAEPSTEAPRWP) is disordered. 228 to 235 (GSAGTGKS) contributes to the ATP binding site. Residues 577–596 (QAYVALSRARSLQGLRVLDF) mediate DNA binding. Residues 622–641 (LESPDDDEAASDQENMDPIL) form a disordered region. Acidic residues predominate over residues 624–641 (SPDDDEAASDQENMDPIL).

It belongs to the helicase family. PIF1 subfamily. Monomer. Interacts with telomerase. Mg(2+) serves as cofactor. Weak ubiquitous expression.

Its subcellular location is the nucleus. The protein resides in the mitochondrion. The enzyme catalyses Couples ATP hydrolysis with the unwinding of duplex DNA at the replication fork by translocating in the 5'-3' direction. This creates two antiparallel DNA single strands (ssDNA). The leading ssDNA polymer is the template for DNA polymerase III holoenzyme which synthesizes a continuous strand.. It catalyses the reaction ATP + H2O = ADP + phosphate + H(+). Its function is as follows. DNA-dependent ATPase and 5'-3' DNA helicase required for the maintenance of both mitochondrial and nuclear genome stability. Efficiently unwinds G-quadruplex (G4) DNA structures and forked RNA-DNA hybrids. Resolves G4 structures, preventing replication pausing and double-strand breaks (DSBs) at G4 motifs. Involved in the maintenance of telomeric DNA. Inhibits telomere elongation, de novo telomere formation and telomere addition to DSBs via catalytic inhibition of telomerase. Reduces the processivity of telomerase by displacing active telomerase from DNA ends. Releases telomerase by unwinding the short telomerase RNA/telomeric DNA hybrid that is the intermediate in the telomerase reaction. Possesses an intrinsic strand annealing activity. The sequence is that of ATP-dependent DNA helicase PIF1 from Homo sapiens (Human).